A 982-amino-acid chain; its full sequence is Glycine dehydrogenase (decarboxylating) (982 aa).

At Lys-729 the chain carries N6-(pyridoxal phosphate)lysine.

This sequence belongs to the GcvP family. As to quaternary structure, the glycine cleavage system is composed of four proteins: P, T, L and H. Pyridoxal 5'-phosphate is required as a cofactor.

It carries out the reaction N(6)-[(R)-lipoyl]-L-lysyl-[glycine-cleavage complex H protein] + glycine + H(+) = N(6)-[(R)-S(8)-aminomethyldihydrolipoyl]-L-lysyl-[glycine-cleavage complex H protein] + CO2. In terms of biological role, the glycine cleavage system catalyzes the degradation of glycine. The P protein binds the alpha-amino group of glycine through its pyridoxal phosphate cofactor; CO(2) is released and the remaining methylamine moiety is then transferred to the lipoamide cofactor of the H protein. In Ralstonia nicotianae (strain ATCC BAA-1114 / GMI1000) (Ralstonia solanacearum), this protein is Glycine dehydrogenase (decarboxylating).